Consider the following 184-residue polypeptide: Photosystem I assembly protein Ycf4 (184 aa).

2 helical membrane passes run 22 to 42 and 57 to 77; these read FCWA…GISS and ILFF…LFIS.

It belongs to the Ycf4 family.

The protein resides in the plastid. It localises to the chloroplast thylakoid membrane. Functionally, seems to be required for the assembly of the photosystem I complex. This chain is Photosystem I assembly protein Ycf4, found in Populus trichocarpa (Western balsam poplar).